The sequence spans 486 residues: Cardiolipin synthase A (486 aa).

The next 2 membrane-spanning stretches (helical) occupy residues 3-23 (IFYNLIKCLIFSTYWLLIANI) and 38-58 (MSWLLTIYIIPFIGISIWFFF). 2 PLD phosphodiesterase domains span residues 219–246 (VDVRQHRKIILIDNYIAYSGSMNLVDPY) and 399–426 (QKGLLHSKSILVDQQLSLIGTVNLDMRS). Catalysis depends on residues histidine 224, lysine 226, aspartate 231, histidine 404, lysine 406, and aspartate 411.

This sequence belongs to the phospholipase D family. Cardiolipin synthase subfamily. ClsA sub-subfamily.

It localises to the cell inner membrane. It catalyses the reaction 2 a 1,2-diacyl-sn-glycero-3-phospho-(1'-sn-glycerol) = a cardiolipin + glycerol. Catalyzes the reversible phosphatidyl group transfer from one phosphatidylglycerol molecule to another to form cardiolipin (CL) (diphosphatidylglycerol) and glycerol. The chain is Cardiolipin synthase A from Buchnera aphidicola subsp. Acyrthosiphon pisum (strain APS) (Acyrthosiphon pisum symbiotic bacterium).